A 780-amino-acid polypeptide reads, in one-letter code: Striatin (780 aa).

Residues 53 to 120 (LHFLQHEWAR…QERAKYHKLK (68 aa)) adopt a coiled-coil conformation. Positions 55–63 (FLQHEWARF) are caveolin-binding. A disordered region spans residues 124–150 (ELNQGDMKPPSYDSDEGNETEVQPQQN). Phosphoserine is present on Ser-137. A calmodulin-binding region spans residues 149-166 (QNSQLMWKQGRQLLRQYL). A Phosphothreonine modification is found at Thr-225. Ser-227, Ser-229, Ser-245, and Ser-259 each carry phosphoserine. 2 disordered regions span residues 289–310 (DFLV…GTDW) and 365–387 (DELP…RLPE). The span at 299–310 (NESRSAGDGTDW) shows a compositional bias: basic and acidic residues. WD repeat units lie at residues 461-500 (SHFD…PAKK), 514-553 (AHKG…IDPY), 567-606 (GHTD…PALS), 662-701 (NSSC…LIHS), 704-743 (AHLE…CIQE), and 750-780 (KFEE…KVFV).

This sequence belongs to the WD repeat striatin family. In terms of assembly, part of the core of STRIPAK complexes composed of PP2A catalytic and scaffolding subunits, the striatins (PP2A regulatory subunits), the striatin-associated proteins MOB4, STRIP1 and STRIP2, PDCD10 and members of the STE20 kinases, such as STK24 and STK26. Interacts with CTTNBP2; this interaction may regulate dendritic spine distribution of STRN. Activation of glutamate receptors weakens the interaction with CTTNBP2. As to expression, preferentially expressed in brain.

The protein localises to the cytoplasm. Its subcellular location is the membrane. It is found in the cell projection. The protein resides in the dendritic spine. In terms of biological role, calmodulin-binding scaffolding protein which is the center of the striatin-interacting phosphatase and kinase (STRIPAK) complexes. STRIPAK complexes have critical roles in protein (de)phosphorylation and are regulators of multiple signaling pathways including Hippo, MAPK, nuclear receptor and cytoskeleton remodeling. Different types of STRIPAK complexes are involved in a variety of biological processes such as cell growth, differentiation, apoptosis, metabolism and immune regulation. The protein is Striatin (STRN) of Homo sapiens (Human).